Here is a 468-residue protein sequence, read N- to C-terminus: Lysosomal dipeptide transporter MFSD1 (468 aa).

The disordered stretch occupies residues 1–25; sequence MEDEEEEARALLPGGSDEAGRETRA. The short motif at 11–12 is the Dileucine internalization motif element; that stretch reads LL. 12 helical membrane-spanning segments follow: residues 42 to 62, 86 to 106, 116 to 136, 138 to 158, 173 to 194, 218 to 238, 270 to 290, 307 to 327, 334 to 354, 364 to 384, 395 to 415, and 421 to 441; these read LAHRLVVLLLMCFLGFGSYFC, LLYAWYSWPNVVLCFFGGFLI, TIIFSCFVCIGQVVFALGGIF, AFWLMELGRFVFGIGGESLAV, LNLVFGLQLSMARIGSTVNMNL, LMIGGITCILSLVCALALAYL, WLIFIICVCYYVAIFPFIGLV, AINSVVYVISAPMSPIFGLLV, IIWVLCAVVTTLASHIMLAFT, LLGLSYSLLACALWPMVAFVV, FMQSIQNLGLAVISIIAGMIL, and LFLEVFFIACVSLSLLSVVLL.

Belongs to the major facilitator superfamily. Homodimer. Interacts with lysosomal protein GLMP (via lumenal domain); the interaction starts while both proteins are still in the endoplasmic reticulum and is required for stabilization of MFSD1 in lysosomes but has no direct effect on its targeting to lysosomes or transporter activity.

The protein resides in the lysosome membrane. The catalysed reaction is L-alpha-aminoacyl-L-arginine(out) = L-alpha-aminoacyl-L-arginine(in). It carries out the reaction L-arginyl-L-alpha-amino acid(out) = L-arginyl-L-alpha-amino acid(in). The enzyme catalyses L-arginyl-glycine(out) = L-arginyl-glycine(in). It catalyses the reaction L-alpha-aminoacyl-L-lysine(out) = L-alpha-aminoacyl-L-lysine(in). The catalysed reaction is L-aspartyl-L-lysine(out) = L-aspartyl-L-lysine(in). It carries out the reaction L-alanyl-L-lysine(out) = L-alanyl-L-lysine(in). The enzyme catalyses L-lysyl-L-alpha-amino acid(out) = L-lysyl-L-alpha-amino acid(in). It catalyses the reaction L-lysyl-L-alanine(out) = L-lysyl-L-alanine(in). The catalysed reaction is L-lysyl-L-lysine(out) = L-lysyl-L-lysine(in). It carries out the reaction L-lysyl-glycine(out) = L-lysyl-glycine(in). The enzyme catalyses L-alpha-aminoacyl-L-histidine(out) = L-alpha-aminoacyl-L-histidine(in). It catalyses the reaction L-histidyl-L-alpha-amino acid(out) = L-histidyl-L-alpha-amino acid(in). The catalysed reaction is L-histidyl-glycine(out) = L-histidyl-glycine(in). Lysosomal dipeptide uniporter that selectively exports lysine, arginine or histidine-containing dipeptides with a net positive charge from the lysosome lumen into the cytosol. Could play a role in a specific type of protein O-glycosylation indirectly regulating macrophages migration and tissue invasion. Also essential for liver homeostasis. This Bos taurus (Bovine) protein is Lysosomal dipeptide transporter MFSD1.